Reading from the N-terminus, the 64-residue chain is Large ribosomal subunit protein bL35 (64 aa).

Belongs to the bacterial ribosomal protein bL35 family.

This Chloroherpeton thalassium (strain ATCC 35110 / GB-78) protein is Large ribosomal subunit protein bL35.